Consider the following 608-residue polypeptide: FAD-binding monooxygenase ktnD (608 aa).

A glycan (N-linked (GlcNAc...) asparagine) is linked at asparagine 4. The chain crosses the membrane as a helical span at residues 17-37 (ATVVIIGAGVSGMCMAIDLLH). FAD contacts are provided by residues 56 to 59 (TWAN), 68 to 69 (DV), and tyrosine 74. Residue 66–68 (ASD) coordinates NADP(+). Residue asparagine 114 is glycosylated (N-linked (GlcNAc...) asparagine). Residues 201-207 (NGASAIQ) and 224-225 (RS) each bind NADP(+). Asparagine 325 carries N-linked (GlcNAc...) asparagine glycosylation. The helical transmembrane segment at 535–555 (ALVSNVTLFLGVALAAGGVYW) threads the bilayer.

It belongs to the FAD-binding monooxygenase family. Requires FAD as cofactor.

The protein resides in the membrane. Functionally, non-reducing polyketide synthase; part of the gene cluster that mediates the biosynthesis of the bicoumarin kotanin. The non-reducing polyketide synthase ktnS first catalyzes the formation of the pentaketidic 4,7-dihydroxy-5-methylcoumarin from acetyl coenzyme A and 4 malonyl coenzyme A molecules. Further O-methylation by ktnB leads to the formation of 7-demethylsiderin. Then, an oxidative phenol coupling catalyzed by the cytochrome P450 monooxygenase ktnC forms the 8,8'-dimer P-orlandin via dimerization the monomeric precursor, 7-demethylsiderin. P-orlandin is subsequently O-methylated in a stepwise fashion to demethylkotanin and kotanin. The function of ktnD within the pathway has not been determined yet. The chain is FAD-binding monooxygenase ktnD from Aspergillus niger (strain ATCC MYA-4892 / CBS 513.88 / FGSC A1513).